A 676-amino-acid chain; its full sequence is Basic proline-rich protein (676 aa).

The N-terminal stretch at 1 to 16 (MLPILLSVALLALSSA) is a signal peptide. Phosphoserine is present on residues Ser-28 and Ser-30. A disordered region spans residues 29–676 (NSAEKFLRPP…PRPPPGPPPQ (648 aa)). Pro residues-rich tracts occupy residues 36–50 (RPPP…PPPE), 71–424 (GPAP…PPAD), and 442–676 (PPPA…PPPQ). Residues 409–457 (APPGARPPPPPPPPADEPQQGPAPSGDKPKKKPPPPAGPPPPGPPSPGP) constitute a propeptide that is removed on maturation.

In terms of tissue distribution, acinar cells and secretory granules of the parotid gland.

Its subcellular location is the secreted. The parotid hormone stimulates dentinal fluid transport in teeth. The protein is Basic proline-rich protein of Sus scrofa (Pig).